We begin with the raw amino-acid sequence, 387 residues long: 3-ketoacyl-CoA thiolase (387 aa).

The active-site Acyl-thioester intermediate is the Cys91. Residues His343 and Cys373 each act as proton acceptor in the active site.

It belongs to the thiolase-like superfamily. Thiolase family. Heterotetramer of two alpha chains (FadB) and two beta chains (FadA).

The protein resides in the cytoplasm. The enzyme catalyses an acyl-CoA + acetyl-CoA = a 3-oxoacyl-CoA + CoA. Its pathway is lipid metabolism; fatty acid beta-oxidation. Functionally, catalyzes the final step of fatty acid oxidation in which acetyl-CoA is released and the CoA ester of a fatty acid two carbons shorter is formed. In Vibrio vulnificus (strain YJ016), this protein is 3-ketoacyl-CoA thiolase.